A 581-amino-acid polypeptide reads, in one-letter code: uncharacterized protein (581 aa).

This is an uncharacterized protein from Borreliella burgdorferi (strain ATCC 35210 / DSM 4680 / CIP 102532 / B31) (Borrelia burgdorferi).